The chain runs to 459 residues: Bifunctional protein GlmU (459 aa).

The tract at residues 1–230 is pyrophosphorylase; sequence MVKRYAVILA…FEETIGVNDR (230 aa). UDP-N-acetyl-alpha-D-glucosamine contacts are provided by residues 9–12, K23, Q73, and 78–79; these read LAAG and GT. Residue D103 coordinates Mg(2+). UDP-N-acetyl-alpha-D-glucosamine contacts are provided by G140, E155, N170, and N228. N228 contacts Mg(2+). The segment at 231–251 is linker; the sequence is VALAEAEKIMRERICRKHMMN. The N-acetyltransferase stretch occupies residues 252 to 459; that stretch reads GVTIIDPAHT…VDRLSIKKNS (208 aa). The UDP-N-acetyl-alpha-D-glucosamine site is built by R333 and K351. Catalysis depends on H363, which acts as the Proton acceptor. The UDP-N-acetyl-alpha-D-glucosamine site is built by Y366 and N377. Residues 386–387, A423, and R440 each bind acetyl-CoA; that span reads NY.

In the N-terminal section; belongs to the N-acetylglucosamine-1-phosphate uridyltransferase family. The protein in the C-terminal section; belongs to the transferase hexapeptide repeat family. In terms of assembly, homotrimer. Mg(2+) serves as cofactor.

The protein localises to the cytoplasm. It carries out the reaction alpha-D-glucosamine 1-phosphate + acetyl-CoA = N-acetyl-alpha-D-glucosamine 1-phosphate + CoA + H(+). The enzyme catalyses N-acetyl-alpha-D-glucosamine 1-phosphate + UTP + H(+) = UDP-N-acetyl-alpha-D-glucosamine + diphosphate. Its pathway is nucleotide-sugar biosynthesis; UDP-N-acetyl-alpha-D-glucosamine biosynthesis; N-acetyl-alpha-D-glucosamine 1-phosphate from alpha-D-glucosamine 6-phosphate (route II): step 2/2. It participates in nucleotide-sugar biosynthesis; UDP-N-acetyl-alpha-D-glucosamine biosynthesis; UDP-N-acetyl-alpha-D-glucosamine from N-acetyl-alpha-D-glucosamine 1-phosphate: step 1/1. It functions in the pathway bacterial outer membrane biogenesis; LPS lipid A biosynthesis. Functionally, catalyzes the last two sequential reactions in the de novo biosynthetic pathway for UDP-N-acetylglucosamine (UDP-GlcNAc). The C-terminal domain catalyzes the transfer of acetyl group from acetyl coenzyme A to glucosamine-1-phosphate (GlcN-1-P) to produce N-acetylglucosamine-1-phosphate (GlcNAc-1-P), which is converted into UDP-GlcNAc by the transfer of uridine 5-monophosphate (from uridine 5-triphosphate), a reaction catalyzed by the N-terminal domain. This chain is Bifunctional protein GlmU, found in Geobacillus sp. (strain WCH70).